Reading from the N-terminus, the 81-residue chain is Photosystem I iron-sulfur center (81 aa).

4Fe-4S ferredoxin-type domains are found at residues 1 to 31 (MSHT…MVPW) and 37 to 68 (GQIA…IRVY). [4Fe-4S] cluster is bound by residues Cys-11, Cys-14, Cys-17, Cys-21, Cys-48, Cys-51, Cys-54, and Cys-58.

The cyanobacterial PSI reaction center is composed of one copy each of PsaA,B,C,D,E,F,I,J,K,L,M and X, and forms trimeric complexes. [4Fe-4S] cluster serves as cofactor.

The protein resides in the cellular thylakoid membrane. It carries out the reaction reduced [plastocyanin] + hnu + oxidized [2Fe-2S]-[ferredoxin] = oxidized [plastocyanin] + reduced [2Fe-2S]-[ferredoxin]. Apoprotein for the two 4Fe-4S centers FA and FB of photosystem I (PSI); essential for photochemical activity. FB is the terminal electron acceptor of PSI, donating electrons to ferredoxin. The C-terminus interacts with PsaA/B/D and helps assemble the protein into the PSI complex. Required for binding of PsaD and PsaE to PSI. PSI is a plastocyanin/cytochrome c6-ferredoxin oxidoreductase, converting photonic excitation into a charge separation, which transfers an electron from the donor P700 chlorophyll pair to the spectroscopically characterized acceptors A0, A1, FX, FA and FB in turn. The sequence is that of Photosystem I iron-sulfur center from Acaryochloris marina (strain MBIC 11017).